Reading from the N-terminus, the 347-residue chain is DNA-directed RNA polymerase subunit alpha (347 aa).

The interval 1–243 (MLIKQGERLI…DQISVFINFD (243 aa)) is alpha N-terminal domain (alpha-NTD). Positions 260–347 (VNEHLFKSID…EWKRKQQNEA (88 aa)) are alpha C-terminal domain (alpha-CTD).

Belongs to the RNA polymerase alpha chain family. In terms of assembly, homodimer. The RNAP catalytic core consists of 2 alpha, 1 beta, 1 beta' and 1 omega subunit. When a sigma factor is associated with the core the holoenzyme is formed, which can initiate transcription.

The catalysed reaction is RNA(n) + a ribonucleoside 5'-triphosphate = RNA(n+1) + diphosphate. DNA-dependent RNA polymerase catalyzes the transcription of DNA into RNA using the four ribonucleoside triphosphates as substrates. This is DNA-directed RNA polymerase subunit alpha from Desulfovibrio desulfuricans (strain ATCC 27774 / DSM 6949 / MB).